A 329-amino-acid chain; its full sequence is Peroxidase 50 (329 aa).

Residues 1–25 (MVVVNKTNLLLLLLSLCLTLDLSSA) form the signal peptide. Intrachain disulfides connect C36–C119, C69–C74, C125–C325, and C204–C236. Catalysis depends on H67, which acts as the Proton acceptor. D68, V71, G73, D75, and S77 together coordinate Ca(2+). P167 is a binding site for substrate. A heme b-binding site is contributed by H197. Ca(2+) is bound at residue T198. N-linked (GlcNAc...) asparagine glycosylation occurs at N215. Residues D249, T252, and D257 each contribute to the Ca(2+) site.

Belongs to the peroxidase family. Classical plant (class III) peroxidase subfamily. It depends on heme b as a cofactor. The cofactor is Ca(2+). As to expression, expressed in roots and leaves.

The protein resides in the secreted. It catalyses the reaction 2 a phenolic donor + H2O2 = 2 a phenolic radical donor + 2 H2O. Its function is as follows. Removal of H(2)O(2), oxidation of toxic reductants, biosynthesis and degradation of lignin, suberization, auxin catabolism, response to environmental stresses such as wounding, pathogen attack and oxidative stress. These functions might be dependent on each isozyme/isoform in each plant tissue. In terms of biological role, exhibits a Ca(2+)-pectate binding affinity which could be interpreted in vivo as a specificity to interact with the pectic structure of the cell wall. This chain is Peroxidase 50 (PER50), found in Arabidopsis thaliana (Mouse-ear cress).